We begin with the raw amino-acid sequence, 331 residues long: D-alanine--D-alanine ligase (331 aa).

In terms of domain architecture, ATP-grasp spans 116-316 (KRLWQTHSLP…YEDFVLQLAA (201 aa)). 142–197 (ADRLGLPLIVKPAREGSSIGLTKVTSVAELPAAYEKAARLDRDVMAEQFIDGDELT) is a binding site for ATP. Mg(2+) contacts are provided by Asp269, Glu283, and Asn285.

This sequence belongs to the D-alanine--D-alanine ligase family. The cofactor is Mg(2+). Requires Mn(2+) as cofactor.

It localises to the cytoplasm. The enzyme catalyses 2 D-alanine + ATP = D-alanyl-D-alanine + ADP + phosphate + H(+). It functions in the pathway cell wall biogenesis; peptidoglycan biosynthesis. Its function is as follows. Cell wall formation. This is D-alanine--D-alanine ligase from Ralstonia nicotianae (strain ATCC BAA-1114 / GMI1000) (Ralstonia solanacearum).